A 356-amino-acid polypeptide reads, in one-letter code: 5-formaminoimidazole-4-carboxamide-1-(beta)-D-ribofuranosyl 5'-monophosphate synthetase 2 (356 aa).

5-amino-1-(5-phospho-beta-D-ribosyl)imidazole-4-carboxamide contacts are provided by histidine 27 and serine 94. Residues 101–333 enclose the ATP-grasp domain; that stretch reads RENFTGMAVP…YSDLMQKRLS (233 aa). Residues 145-196 and glutamate 226 each bind ATP; that span reads PHDI…TRYD. Position 255 (asparagine 255) interacts with 5-amino-1-(5-phospho-beta-D-ribosyl)imidazole-4-carboxamide. Residues glutamate 293 and glutamate 306 each contribute to the Mg(2+) site.

The protein belongs to the phosphohexose mutase family. The cofactor is Mg(2+). It depends on Mn(2+) as a cofactor.

The catalysed reaction is 5-amino-1-(5-phospho-beta-D-ribosyl)imidazole-4-carboxamide + formate + ATP = 5-formamido-1-(5-phospho-D-ribosyl)imidazole-4-carboxamide + ADP + phosphate. The protein operates within purine metabolism; IMP biosynthesis via de novo pathway; 5-formamido-1-(5-phospho-D-ribosyl)imidazole-4-carboxamide from 5-amino-1-(5-phospho-D-ribosyl)imidazole-4-carboxamide (formate route): step 1/1. Its function is as follows. Catalyzes the ATP- and formate-dependent formylation of 5-aminoimidazole-4-carboxamide-1-beta-d-ribofuranosyl 5'-monophosphate (AICAR) to 5-formaminoimidazole-4-carboxamide-1-beta-d-ribofuranosyl 5'-monophosphate (FAICAR) in the absence of folates. This Methanosarcina mazei (strain ATCC BAA-159 / DSM 3647 / Goe1 / Go1 / JCM 11833 / OCM 88) (Methanosarcina frisia) protein is 5-formaminoimidazole-4-carboxamide-1-(beta)-D-ribofuranosyl 5'-monophosphate synthetase 2.